Here is a 66-residue protein sequence, read N- to C-terminus: Toxin BeM14 (66 aa).

The 65-residue stretch at Arg2–Arg66 folds into the LCN-type CS-alpha/beta domain. Intrachain disulfides connect Cys12-Cys65, Cys16-Cys36, Cys22-Cys46, and Cys26-Cys48.

Belongs to the long (4 C-C) scorpion toxin superfamily. Sodium channel inhibitor family. Alpha subfamily. As to expression, expressed by the venom gland.

Its subcellular location is the secreted. In terms of biological role, alpha toxins bind voltage-independently at site-3 of sodium channels (Nav) and inhibit the inactivation of the activated channels, thereby blocking neuronal transmission. Has paralytic activity in mice. This Mesobuthus eupeus (Lesser Asian scorpion) protein is Toxin BeM14.